We begin with the raw amino-acid sequence, 84 residues long: Delta-thalatoxin-Tas1a (84 aa).

The N-terminal stretch at Met-1 to Ala-19 is a signal peptide. The propeptide occupies Met-20–Ala-33. 3 disulfides stabilise this stretch: Cys-38/Cys-78, Cys-40/Cys-68, and Cys-61/Cys-79.

It belongs to the sea anemone sodium channel inhibitory toxin family. Type II subfamily.

It localises to the secreted. The protein resides in the nematocyst. Its function is as follows. Binds specifically to the voltage-gated sodium channel (Nav) and delays its inactivation. The sequence is that of Delta-thalatoxin-Tas1a from Thalassianthus aster (Fuzzy-tipped anemone).